The following is a 344-amino-acid chain: N-acetyl-gamma-glutamyl-phosphate reductase (344 aa).

C148 is a catalytic residue.

Belongs to the NAGSA dehydrogenase family. Type 1 subfamily.

Its subcellular location is the cytoplasm. The enzyme catalyses N-acetyl-L-glutamate 5-semialdehyde + phosphate + NADP(+) = N-acetyl-L-glutamyl 5-phosphate + NADPH + H(+). It participates in amino-acid biosynthesis; L-arginine biosynthesis; N(2)-acetyl-L-ornithine from L-glutamate: step 3/4. Its function is as follows. Catalyzes the NADPH-dependent reduction of N-acetyl-5-glutamyl phosphate to yield N-acetyl-L-glutamate 5-semialdehyde. The polypeptide is N-acetyl-gamma-glutamyl-phosphate reductase (Clostridium kluyveri (strain NBRC 12016)).